A 479-amino-acid polypeptide reads, in one-letter code: NADH-quinone oxidoreductase subunit N (479 aa).

The next 14 helical transmembrane spans lie at 3–23 (MLYGIMPEISLLLSALIFQLI), 40–60 (IGFAAILIAILVFHPSWFNGI), 77–97 (IIILIFYIFLTLIYSGYIKVA), 102–122 (HSEYIVLMQLGALGGLILVSA), 125–145 (FMVMYLGIEMQGIIGYILTTF), 159–179 (YFILGTVFSAIMLFGISLVYG), 200–220 (MAVLVAAILMILVGVLFKLSI), 234–254 (APLVVVALFSSLPKISVLALL), 268–288 (FFYIKTIIMVLACLSLIVGAF), 299–319 (FIAYSAILNLGYAVLALVANS), 327–347 (ISYFYIIIYAASMLGFIAIII), 373–393 (SILIAIQMFSLVGIPPFAGFI), 409–429 (ELIIMGIAAVVIGSYCYLNIV), and 452–472 (LVSIASTIIVISLMIICMLFG).

This sequence belongs to the complex I subunit 2 family. As to quaternary structure, NDH-1 is composed of 14 different subunits. Subunits NuoA, H, J, K, L, M, N constitute the membrane sector of the complex.

Its subcellular location is the cell inner membrane. The catalysed reaction is a quinone + NADH + 5 H(+)(in) = a quinol + NAD(+) + 4 H(+)(out). Functionally, NDH-1 shuttles electrons from NADH, via FMN and iron-sulfur (Fe-S) centers, to quinones in the respiratory chain. The immediate electron acceptor for the enzyme in this species is believed to be ubiquinone. Couples the redox reaction to proton translocation (for every two electrons transferred, four hydrogen ions are translocated across the cytoplasmic membrane), and thus conserves the redox energy in a proton gradient. This is NADH-quinone oxidoreductase subunit N from Orientia tsutsugamushi (strain Ikeda) (Rickettsia tsutsugamushi).